Consider the following 432-residue polypeptide: Nematocyst expressed protein 3-like (432 aa).

The N-terminal stretch at 1 to 19 (MRVVYLVLVVAVIIAITEA) is a signal peptide. Cystine bridges form between cysteine 52–cysteine 91, cysteine 59–cysteine 84, cysteine 73–cysteine 88, cysteine 125–cysteine 140, cysteine 157–cysteine 176, and cysteine 166–cysteine 180. ShKT domains follow at residues 59 to 91 (CKAF…CKLC), 107 to 143 (VVRA…CMLC), and 149 to 183 (GPCD…CDVY). The segment covering 235-313 (GAQYPAATAA…PEAAPSEPEA (79 aa)) has biased composition (low complexity). The tract at residues 235-432 (GAQYPAATAA…KSKSGHKRHH (198 aa)) is disordered. Residues 314-330 (APAPAPEMAPAPAPEMA) show a composition bias toward pro residues. Positions 331–408 (PAPEAASAPA…AAPSEQPMPG (78 aa)) are enriched in low complexity. Positions 409–432 (KKSKSKPSKRKGVKKSKSGHKRHH) are enriched in basic residues.

The protein belongs to the NEP3 family. In terms of tissue distribution, nematocytes. In late planulae, transcripts are found throughout the ectoderm in nematocytes, with high concentration of expressing cells in the oral pole. In primary polyps, is expressed in nematocytes in the body wall and physa ectoderm and in the upper and lower pharynx.

The protein localises to the nematocyst. Its subcellular location is the secreted. In terms of biological role, probable toxin. In Nematostella vectensis (Starlet sea anemone), this protein is Nematocyst expressed protein 3-like.